We begin with the raw amino-acid sequence, 406 residues long: GTPase Obg (406 aa).

One can recognise an Obg domain in the interval 1–159 (MKFVDEVSIF…RDLKLELKVL (159 aa)). A disordered region spans residues 126-149 (GNTRFKSSTNRAPRQTTPGKPGES). Residues 129 to 143 (RFKSSTNRAPRQTTP) show a composition bias toward polar residues. The OBG-type G domain maps to 160–333 (ADVGLLGLPN…ICRDIMHYLE (174 aa)). GTP is bound by residues 166-173 (GLPNAGKS), 191-195 (FTTLV), 213-216 (DIPG), 283-286 (NKMD), and 314-316 (SAI). Ser-173 and Thr-193 together coordinate Mg(2+). The tract at residues 376–406 (SGVRSVDDIDEDDDFFDDEDDDGPEIIYVRD) is disordered. The span at 383-399 (DIDEDDDFFDDEDDDGP) shows a compositional bias: acidic residues.

The protein belongs to the TRAFAC class OBG-HflX-like GTPase superfamily. OBG GTPase family. Monomer. The cofactor is Mg(2+).

It localises to the cytoplasm. An essential GTPase which binds GTP, GDP and possibly (p)ppGpp with moderate affinity, with high nucleotide exchange rates and a fairly low GTP hydrolysis rate. Plays a role in control of the cell cycle, stress response, ribosome biogenesis and in those bacteria that undergo differentiation, in morphogenesis control. This Ectopseudomonas mendocina (strain ymp) (Pseudomonas mendocina) protein is GTPase Obg.